A 464-amino-acid polypeptide reads, in one-letter code: UDP-N-acetylmuramate--L-alanine ligase (464 aa).

112–118 (GTHGKTT) provides a ligand contact to ATP.

Belongs to the MurCDEF family.

Its subcellular location is the cytoplasm. It catalyses the reaction UDP-N-acetyl-alpha-D-muramate + L-alanine + ATP = UDP-N-acetyl-alpha-D-muramoyl-L-alanine + ADP + phosphate + H(+). It participates in cell wall biogenesis; peptidoglycan biosynthesis. Its function is as follows. Cell wall formation. This chain is UDP-N-acetylmuramate--L-alanine ligase, found in Chromobacterium violaceum (strain ATCC 12472 / DSM 30191 / JCM 1249 / CCUG 213 / NBRC 12614 / NCIMB 9131 / NCTC 9757 / MK).